A 327-amino-acid chain; its full sequence is Ribose operon repressor (327 aa).

One can recognise an HTH lacI-type domain in the interval 1 to 56 (MTTIKQVALEAGVSKSTVSRFIAQNGYVSDEAREKIERAIKKLNFRPNLSAQSLKT). A DNA-binding region (H-T-H motif) is located at residues 4-23 (IKQVALEAGVSKSTVSRFIA).

Transcriptional repressor for the ribose rbsDACBK operon. The protein is Ribose operon repressor (rbsR) of Lactococcus lactis subsp. lactis (strain IL1403) (Streptococcus lactis).